The sequence spans 905 residues: Chitin synthase 3B (905 aa).

Residues 1 to 10 (MAYNGRDQEY) are compositionally biased toward basic and acidic residues. Residues 1–136 (MAYNGRDQEY…GGGGGLGRSK (136 aa)) form a disordered region. Residues 81 to 93 (GPTGYGDTGGSFG) are compositionally biased toward gly residues. N536 carries an N-linked (GlcNAc...) asparagine glycan. The chain crosses the membrane as a helical span at residues 562–584 (MFFLHIQLIYTTLNTMFAWFSLG). An N-linked (GlcNAc...) asparagine glycan is attached at N601. 6 helical membrane passes run 618 to 638 (IVNALLQYLYLAFVMLQFILA), 653 to 673 (SFMVFGLIQGYILVLSAYLVV), 705 to 725 (VILVALITIYGLNFIASFMYL), 733 to 753 (SFPYYLVLMSTYINILMVYAF), 832 to 852 (TGLVVCWLFGNILLIVCITST), and 873 to 893 (FLLYATAVLSLVRFFGFLWFL).

This sequence belongs to the chitin synthase family. Class III subfamily.

Its subcellular location is the cell membrane. It carries out the reaction [(1-&gt;4)-N-acetyl-beta-D-glucosaminyl](n) + UDP-N-acetyl-alpha-D-glucosamine = [(1-&gt;4)-N-acetyl-beta-D-glucosaminyl](n+1) + UDP + H(+). Functionally, polymerizes chitin, a structural polymer of the cell wall and septum, by transferring the sugar moiety of UDP-GlcNAc to the non-reducing end of the growing chitin polymer. Plays essential functions in fungal survival and host infection. The protein is Chitin synthase 3B of Gibberella zeae (strain ATCC MYA-4620 / CBS 123657 / FGSC 9075 / NRRL 31084 / PH-1) (Wheat head blight fungus).